Reading from the N-terminus, the 505-residue chain is Trans-cinnamate 4-monooxygenase (505 aa).

A helical transmembrane segment spans residues 3-23 (LLLLEKTLLALFLAAITAITI). Residues 213–218 (RSRLAQ) and Ala-306 each bind (E)-cinnamate. Cys-447 contacts heme.

This sequence belongs to the cytochrome P450 family. Requires heme as cofactor.

It localises to the membrane. It catalyses the reaction (E)-cinnamate + reduced [NADPH--hemoprotein reductase] + O2 = (E)-4-coumarate + oxidized [NADPH--hemoprotein reductase] + H2O + H(+). It functions in the pathway phenylpropanoid metabolism; trans-4-coumarate biosynthesis; trans-4-coumarate from trans-cinnamate: step 1/1. Functionally, catalyzes the first oxidative step of the phenylpropanoid pathway in higher plants by transforming trans-cinnamate into p-coumarate. The compounds formed by this pathway are essential components for lignification, pollination, and defense against ultraviolet light, predators and pathogens. This is Trans-cinnamate 4-monooxygenase (CYP73A9) from Pisum sativum (Garden pea).